The chain runs to 196 residues: Putative NADH dehydrogenase/NAD(P)H nitroreductase PXO_03909 (196 aa).

Belongs to the nitroreductase family. HadB/RutE subfamily. FMN is required as a cofactor.

In Xanthomonas oryzae pv. oryzae (strain PXO99A), this protein is Putative NADH dehydrogenase/NAD(P)H nitroreductase PXO_03909.